Here is a 208-residue protein sequence, read N- to C-terminus: Ribosomal RNA small subunit methyltransferase G (208 aa).

S-adenosyl-L-methionine-binding positions include Gly74, Leu79, 125-126, and Arg140; that span reads VE.

Belongs to the methyltransferase superfamily. RNA methyltransferase RsmG family.

It is found in the cytoplasm. It catalyses the reaction guanosine(527) in 16S rRNA + S-adenosyl-L-methionine = N(7)-methylguanosine(527) in 16S rRNA + S-adenosyl-L-homocysteine. Specifically methylates the N7 position of guanine in position 527 of 16S rRNA. In Shewanella denitrificans (strain OS217 / ATCC BAA-1090 / DSM 15013), this protein is Ribosomal RNA small subunit methyltransferase G.